A 198-amino-acid chain; its full sequence is Small ribosomal subunit protein uS4c (198 aa).

In terms of domain architecture, S4 RNA-binding spans 85–145 (LRLDATIFRL…PKKFTIILIC (61 aa)).

This sequence belongs to the universal ribosomal protein uS4 family. In terms of assembly, part of the 30S ribosomal subunit.

It localises to the plastid. It is found in the apicoplast. One of the primary rRNA binding proteins, it binds directly to 16S rRNA where it nucleates assembly of the body of the 30S subunit. The protein is Small ribosomal subunit protein uS4c (rps4) of Toxoplasma gondii.